The following is a 266-amino-acid chain: Heat-inducible transcription repressor HrcA (266 aa).

Belongs to the HrcA family.

Its function is as follows. Negative regulator of class I heat shock genes (grpE-dnaK-dnaJ and groELS operons). Prevents heat-shock induction of these operons. The protein is Heat-inducible transcription repressor HrcA of Helicobacter pylori (strain J99 / ATCC 700824) (Campylobacter pylori J99).